The chain runs to 123 residues: Alpha-lactalbumin B/C (123 aa).

Positions 1–123 constitute a C-type lysozyme domain; sequence KQFTKCQLSQ…KLEQWLCEEL (123 aa). 4 cysteine pairs are disulfide-bonded: Cys-6/Cys-120, Cys-28/Cys-111, Cys-61/Cys-77, and Cys-73/Cys-91. Residues Lys-79, Asp-82, Asp-84, Asp-87, and Asp-88 each coordinate Ca(2+).

Belongs to the glycosyl hydrolase 22 family. As to quaternary structure, lactose synthase (LS) is a heterodimer of a catalytic component, beta1,4-galactosyltransferase (beta4Gal-T1) and a regulatory component, alpha-lactalbumin (LA). In terms of tissue distribution, mammary gland specific. Secreted in milk.

The protein resides in the secreted. Functionally, regulatory subunit of lactose synthase, changes the substrate specificity of galactosyltransferase in the mammary gland making glucose a good acceptor substrate for this enzyme. This enables LS to synthesize lactose, the major carbohydrate component of milk. In other tissues, galactosyltransferase transfers galactose onto the N-acetylglucosamine of the oligosaccharide chains in glycoproteins. The protein is Alpha-lactalbumin B/C of Equus caballus (Horse).